A 143-amino-acid chain; its full sequence is Peptide methionine sulfoxide reductase MsrB (143 aa).

A MsrB domain is found at 16 to 139; sequence DAELRRRLTP…NSAALNFEAK (124 aa). 4 residues coordinate Zn(2+): Cys55, Cys58, Cys104, and Cys107. The Nucleophile role is filled by Cys128.

The protein belongs to the MsrB Met sulfoxide reductase family. Requires Zn(2+) as cofactor.

It catalyses the reaction L-methionyl-[protein] + [thioredoxin]-disulfide + H2O = L-methionyl-(R)-S-oxide-[protein] + [thioredoxin]-dithiol. This Burkholderia thailandensis (strain ATCC 700388 / DSM 13276 / CCUG 48851 / CIP 106301 / E264) protein is Peptide methionine sulfoxide reductase MsrB.